A 441-amino-acid polypeptide reads, in one-letter code: Transcriptional regulatory protein ZraR (441 aa).

Residues aspartate 7–leucine 121 enclose the Response regulatory domain. Aspartate 56 is subject to 4-aspartylphosphate. The Sigma-54 factor interaction domain maps to methionine 141–valine 370. ATP is bound by residues glycine 172, threonine 173, arginine 329, and arginine 359. Positions lysine 421–serine 440 form a DNA-binding region, H-T-H motif.

In terms of assembly, forms homohexamers in the crystal structure. However, the dimerization interface between DNA-binding domains observed in the crystal structure suggests that dodecamers, rather than hexamers, might be the functionally important oligomer. Post-translationally, phosphorylated by ZraS.

The protein localises to the cytoplasm. With respect to regulation, activity of the ZraS/ZraR two-component system is repressed by the zinc-bound form of ZraP, which probably interacts with the periplasmic region of ZraS. Its function is as follows. Part of the Zra signaling pathway, an envelope stress response (ESR) system composed of the periplasmic accessory protein ZraP, the histidine kinase ZraS and the transcriptional regulator ZraR. The ZraPSR system contributes to antibiotic resistance and is important for membrane integrity in the presence of membrane-targeting biocides. ZraR is a member of the two-component regulatory system ZraS/ZraR. When activated by ZraS, acts in conjunction with sigma-54 to regulate the expression of zraP in the presence of high Zn(2+) or Pb(2+) concentrations. Also positively autoregulates the expression of the zraSR operon. This Salmonella typhimurium (strain LT2 / SGSC1412 / ATCC 700720) protein is Transcriptional regulatory protein ZraR.